Consider the following 169-residue polypeptide: MGDLSTTILAAEEGGGGNFLVPNGTFFFVLLIFLIVLGVIAKWVVPPISKVLQEREAMVTKTVEDNRKAADLFAAAQGDSQQVMAKARREASGIRDEARGEGRKILEDMRSRASAESAATLQKTNEELSRQGQQTAAELQSSIETLSATLASRVLGVDISSAAATSQGR.

A helical membrane pass occupies residues 26–46 (FFFVLLIFLIVLGVIAKWVVP).

It belongs to the ATPase B chain family. In terms of assembly, F-type ATPases have 2 components, F(1) - the catalytic core - and F(0) - the membrane proton channel. F(1) has five subunits: alpha(3), beta(3), gamma(1), delta(1), epsilon(1). F(0) has three main subunits: a(1), b(2) and c(10-14). The alpha and beta chains form an alternating ring which encloses part of the gamma chain. F(1) is attached to F(0) by a central stalk formed by the gamma and epsilon chains, while a peripheral stalk is formed by the delta and b chains.

Its subcellular location is the cell membrane. F(1)F(0) ATP synthase produces ATP from ADP in the presence of a proton or sodium gradient. F-type ATPases consist of two structural domains, F(1) containing the extramembraneous catalytic core and F(0) containing the membrane proton channel, linked together by a central stalk and a peripheral stalk. During catalysis, ATP synthesis in the catalytic domain of F(1) is coupled via a rotary mechanism of the central stalk subunits to proton translocation. Functionally, component of the F(0) channel, it forms part of the peripheral stalk, linking F(1) to F(0). This is ATP synthase subunit b from Mycobacterium sp. (strain JLS).